Here is a 684-residue protein sequence, read N- to C-terminus: Probable metal-nicotianamine transporter YSL9 (684 aa).

A compositionally biased stretch (basic residues) spans 1–10 (MKQERRRKRQ). Residues 1–55 (MKQERRRKRQPGPPRLELVVAHPREEEMAGLDGGGDAEEGATHARGGGGAPPPWR) form a disordered region. A run of 14 helical transmembrane segments spans residues 58-78 (LTARGLVASLAVGAMYSVIVM), 82-102 (LTTGLVPTLNVSAALIAFVVL), 130-150 (CAVACYSIAVGGGFGSYLLGL), 174-194 (GIAWMTGFLLAVSFVGLLALV), 234-254 (VNGFTKYFAMSFFWSFFQWFY), 295-315 (LVNLSLLLGAILSWGVMWPLI), 341-361 (FICVALILGDGLYNFVKIVAL), 402-422 (LAFSGYLGLTFIAVIAIPMMF), 430-450 (VVIAYLLAPALGFCNAYGAGL), 462-482 (IALFILAAWAGKDSGVVAGLV), 515-535 (IIAQAIGTVMGCVISPLTFFL), 568-588 (FSALPQHCLQLCYGFFGFAVA), 612-632 (VPFLVGASFAIDMCIGSLIVF), and 642-662 (AALMVPAVASGLICGDGLWIF).

The protein belongs to the YSL (TC 2.A.67.2) family.

It is found in the membrane. May be involved in the transport of nicotianamine-chelated metals. This is Probable metal-nicotianamine transporter YSL9 (YSL9) from Oryza sativa subsp. japonica (Rice).